The chain runs to 426 residues: D-ribulose kinase (426 aa).

Residues Asp8, 12 to 15 (SGAR), Ser72, and Asp221 each bind substrate. ATP is bound by residues Ser243, Gly281, and 376 to 380 (GGAKN).

This sequence belongs to the FGGY kinase family. The cofactor is a divalent metal cation.

The catalysed reaction is D-ribulose + ATP = D-ribulose 5-phosphate + ADP + H(+). In terms of biological role, exhibits ATP hydrolysis without substrate. Phosphorylates D-ribulose. This is D-ribulose kinase from Synechococcus elongatus (strain ATCC 33912 / PCC 7942 / FACHB-805) (Anacystis nidulans R2).